A 218-amino-acid chain; its full sequence is Small ribosomal subunit protein uS3c (218 aa).

Residues 47 to 118 (VQKNIRISSG…KLNIAITRIT (72 aa)) form the KH type-2 domain.

The protein belongs to the universal ribosomal protein uS3 family. In terms of assembly, part of the 30S ribosomal subunit.

It is found in the plastid. Its subcellular location is the chloroplast. This is Small ribosomal subunit protein uS3c (rps3) from Vitis vinifera (Grape).